A 271-amino-acid chain; its full sequence is Acetyl-coenzyme A carboxylase carboxyl transferase subunit alpha (271 aa).

A CoA carboxyltransferase C-terminal domain is found at 1-247; that stretch reads MSRELIRTAD…KKTILEALGE (247 aa).

The protein belongs to the AccA family. Acetyl-CoA carboxylase is a heterohexamer composed of biotin carboxyl carrier protein (AccB), biotin carboxylase (AccC) and two subunits each of ACCase subunit alpha (AccA) and ACCase subunit beta (AccD).

The protein localises to the cytoplasm. The catalysed reaction is N(6)-carboxybiotinyl-L-lysyl-[protein] + acetyl-CoA = N(6)-biotinyl-L-lysyl-[protein] + malonyl-CoA. It participates in lipid metabolism; malonyl-CoA biosynthesis; malonyl-CoA from acetyl-CoA: step 1/1. Component of the acetyl coenzyme A carboxylase (ACC) complex. First, biotin carboxylase catalyzes the carboxylation of biotin on its carrier protein (BCCP) and then the CO(2) group is transferred by the carboxyltransferase to acetyl-CoA to form malonyl-CoA. The sequence is that of Acetyl-coenzyme A carboxylase carboxyl transferase subunit alpha from Clostridium perfringens (strain ATCC 13124 / DSM 756 / JCM 1290 / NCIMB 6125 / NCTC 8237 / Type A).